The primary structure comprises 295 residues: 4-diphosphocytidyl-2-C-methyl-D-erythritol kinase (295 aa).

Lysine 22 is an active-site residue. 106 to 116 (PAGGGFGGGSS) contacts ATP. Residue aspartate 148 is part of the active site.

The protein belongs to the GHMP kinase family. IspE subfamily.

The enzyme catalyses 4-CDP-2-C-methyl-D-erythritol + ATP = 4-CDP-2-C-methyl-D-erythritol 2-phosphate + ADP + H(+). It participates in isoprenoid biosynthesis; isopentenyl diphosphate biosynthesis via DXP pathway; isopentenyl diphosphate from 1-deoxy-D-xylulose 5-phosphate: step 3/6. Functionally, catalyzes the phosphorylation of the position 2 hydroxy group of 4-diphosphocytidyl-2C-methyl-D-erythritol. The sequence is that of 4-diphosphocytidyl-2-C-methyl-D-erythritol kinase from Xanthomonas campestris pv. campestris (strain 8004).